Reading from the N-terminus, the 951-residue chain is Spliceosome associated factor 3, U4/U6 recycling protein (951 aa).

Residues 1–58 (MAATGNEEQTLLPDIEEEAEGMEREMESEDDEEEGMGVEHSEEEDEEDTSEDERENEA) form a disordered region. Over residues 14–56 (DIEEEAEGMEREMESEDDEEEGMGVEHSEEEDEEDTSEDEREN) the composition is skewed to acidic residues. HAT repeat units follow at residues 88 to 120 (GKLHRLRKARQKMSELFPLTEEIWLDWLKDEIR), 126 to 157 (SDREKVYELFERAIKDYVCPEIWLEYVQYSIG), 163 to 199 (GGIERVRSIFERALTAVGLHMTKGASIWEAYREFEIV), 222 to 255 (AQLERIHTLFRRQLAVPLMDMEGTYAEYSDWADD), 304 to 336 (GDPARVQIIFERALAENCLVPDLWIKYTTYLDR), 339 to 371 (KIKDLVLSAHERAVRNCPWTMGLWKSYLLALER), 374 to 410 (ADHQTVKDVFEKALNAGFIQATDYVEIWQSYLDYLRR), and 467 to 500 (KNMQKARELWDSIMTKGNAKYANMWLEYYNLERS). The necessary and sufficient for U6 snRNA binding stretch occupies residues 517-941 (CTSDYPEHVC…LDTQTKSLSN (425 aa)). Positions 533-593 (ERVEGSLEDW…VKADKKAQKK (61 aa)) form a coiled coil. Positions 567 to 581 (EALHARQEEEKAEQR) are enriched in basic and acidic residues. A disordered region spans residues 567-686 (EALHARQEEE…HDMPKEQRKD (120 aa)). Residues 582–596 (RKVKADKKAQKKGQK) are compositionally biased toward basic residues. Positions 608 to 619 (DDDEEEWGEEAE) are enriched in acidic residues. A compositionally biased stretch (basic and acidic residues) spans 674-686 (RQPHDMPKEQRKD). 2 consecutive RRM domains span residues 688-766 (NCVF…PCVD) and 785-862 (HKIF…ISNP). A disordered region spans residues 905–938 (RQSTPDAKAENGTISAPHATVTDGETSLDTQTKS). Polar residues predominate over residues 927 to 938 (DGETSLDTQTKS).

It localises to the nucleus. Its subcellular location is the nucleoplasm. It is found in the cajal body. The protein resides in the nucleus speckle. The protein localises to the cytoplasm. In terms of biological role, U6 snRNP-binding protein that functions as a recycling factor of the splicing machinery. Promotes the initial reassembly of U4 and U6 snRNPs following their ejection from the spliceosome during its maturation. May also function as a substrate targeting factor for deubiquitinases and mediate the deubiquitination of components of the spliceosome and histones. The chain is Spliceosome associated factor 3, U4/U6 recycling protein from Danio rerio (Zebrafish).